A 449-amino-acid chain; its full sequence is Mannan endo-1,6-alpha-mannosidase DCW1 (449 aa).

The first 21 residues, 1-21 (MLVNKVIGLLGVLFATRFTNA), serve as a signal peptide directing secretion. Asn-34, Asn-84, Asn-109, Asn-133, Asn-203, Asn-225, Asn-240, Asn-265, Asn-281, Asn-337, Asn-362, and Asn-420 each carry an N-linked (GlcNAc...) asparagine glycan. A lipid anchor (GPI-anchor amidated glycine) is attached at Gly-428. Positions 429–449 (AGIITAVIGISIVACALWLVF) are cleaved as a propeptide — removed in mature form.

The protein belongs to the glycosyl hydrolase 76 family.

The protein localises to the cell membrane. The catalysed reaction is Random hydrolysis of (1-&gt;6)-alpha-D-mannosidic linkages in unbranched (1-&gt;6)-mannans.. Required for normal synthesis of the cell wall. This Saccharomyces cerevisiae (strain ATCC 204508 / S288c) (Baker's yeast) protein is Mannan endo-1,6-alpha-mannosidase DCW1 (DCW1).